A 483-amino-acid polypeptide reads, in one-letter code: Cysteine proteinase 1, mitochondrial (483 aa).

The transit peptide at 1 to 30 (MLPTSVSRSLYLKTFRSHLLRAPQIVLKRM) directs the protein to the mitochondrion. Residues Cys-102, His-398, and Asn-421 contribute to the active site. Position 483 (Lys-483) is a propeptide, removed in mature form; by autocatalysis.

It belongs to the peptidase C1 family. In terms of assembly, homohexamer. Binds to nucleic acids. Binds single-stranded DNA and RNA with higher affinity than double-stranded DNA. The N-terminus of isoform Cytoplasmic is blocked.

The protein resides in the mitochondrion. It is found in the cytoplasm. It catalyses the reaction Inactivates bleomycin B2 (a cytotoxic glycometallopeptide) by hydrolysis of a carboxyamide bond of beta-aminoalanine, but also shows general aminopeptidase activity. The specificity varies somewhat with source, but amino acid arylamides of Met, Leu and Ala are preferred.. Its activity is regulated as follows. Inhibited by E64, a specific inhibitor of cysteine proteases, N-ethylmaleimide, iodacetamide, and mercury and zinc ions. Its function is as follows. The normal physiological role of the enzyme is unknown, but it is not essential for the viability of yeast cells. Has aminopeptidase activity, shortening substrate peptides sequentially by 1 amino acid. Has bleomycin hydrolase activity, which can protect the cell from the toxic effects of bleomycin. Has homocysteine-thiolactonase activity, protecting the cell against homocysteine toxicity. Acts as a repressor in the GAL4 regulatory system, but this does not require either the peptidase or nucleic acid-binding activities. The protein is Cysteine proteinase 1, mitochondrial (LAP3) of Saccharomyces cerevisiae (strain JAY291) (Baker's yeast).